A 302-amino-acid chain; its full sequence is Heat stress transcription factor B-1 (302 aa).

Low complexity predominate over residues 1–15 (MAAAEAAAAVGKQQQ). Disordered regions lie at residues 1–33 (MAAAEAAAAVGKQQQKGGGGRGGGGGGPAPFLT) and 116–184 (GIRR…RKDN). The span at 16–28 (KGGGGRGGGGGGP) shows a compositional bias: gly residues. Residues 123-133 (TTPQSSKSCGS) show a composition bias toward polar residues. The span at 139–150 (FPPPLPPLPPEP) shows a compositional bias: pro residues. Low complexity predominate over residues 151–172 (SATTSSGNDRSSSSASSPPRAD). Residues 170–202 (RADITSENEQLRKDNQTLTMELARARRHCEELL) are a coiled coil. The segment at 180-209 (LRKDNQTLTMELARARRHCEELLGFLSRFL) is hydrophobic repeat HR-A/B. The short motif at 211–218 (VRQLDLRL) is the Nuclear export signal element. The Nuclear localization signal signature appears at 263–267 (RKRAR).

The protein belongs to the HSF family. Class B subfamily. Homotrimer. Post-translationally, exhibits temperature-dependent phosphorylation.

It is found in the cytoplasm. The protein resides in the nucleus. Transcriptional regulator that specifically binds DNA of heat shock promoter elements (HSE). The sequence is that of Heat stress transcription factor B-1 (HSFB1) from Oryza sativa subsp. japonica (Rice).